The sequence spans 382 residues: Acetyltransferase eriL (382 aa).

A run of 6 helical transmembrane segments spans residues 5–25 (LQPL…LGAV), 33–53 (ALLF…TTTG), 59–79 (IVTW…LLIN), 146–166 (TLFY…SPVF), 192–212 (LWSY…ALGV), and 335–355 (GYMW…DPQF).

Belongs to the wax synthase family.

Its subcellular location is the membrane. The enzyme catalyses cyathatriol + acetyl-CoA = 11-O-acetylcyathatriol + CoA. It carries out the reaction cyathin A3 + acetyl-CoA = 11-O-acetylcyathin A3 + CoA. It functions in the pathway secondary metabolite biosynthesis. Acetyltransferase; part of the gene cluster that mediates the biosynthesis of erinacines, cyathane-xylosides that show unique biological activities, including leishmanicidal activity, stimulating activity for nerve growth-factor synthesis, and agonistic activity toward the kappa opioid receptor. Within the pathway, eriL converts cyathatriol into 11-O-acetyl-cyathatriol. EriL is also able to acetylate cyathin A3 to produce 11-O-acetylcyathin A3. The first step of the erinacines biosynthesis pathway is catalyzed by the geranylgeranyl diphosphate (GGPP) synthase eriE via conversion of farnesyl pyrophosphate and isopentyl pyrophosphate into geranylgeranyl pyrophosphate (GGPP). GGPP is then substrate of the diterpene cyclase eriG for the production of cyatha-3,12-diene. The cytochrome P450 monooxygenase eriI then hydroxylates cyatha-3,12-diene at C-14 of the seven-membered ring to produce erinacol, which is further hydroxylated at C-15 by the cytochrome P450 monooxygenase eriC to yield cyathadiol. The cytochrome P450 monooxygenase eriA then catalyzes C-11 hydroxylation in the presence of the short chain dehydrogenase/reductase (SDR) eriH, which leads to the production of cyathatriol. The acetyltransferase eriL converts cyathatriol into 11-O-acetyl-cyathatriol. The SDR eriH catalyzes further oxidation of 11-O-acetyl-cyathatriol into 1-O-acetylcyathin A3. Finally, the glycosyl transferase eriJ tranfers xylose from UDP-xylose onto C-14 of 11-O-acetyl-cyathatriol to form eracine Q. EriJ is also able to convert 11-O-acetyl-cyathatriol to eracine Q2 by using UDP-D-glucose as cosubstrate, but at a lower rate. This chain is Acetyltransferase eriL, found in Hericium erinaceus (Lion's mane mushroom).